The primary structure comprises 273 residues: NH(3)-dependent NAD(+) synthetase (273 aa).

46–53 (GISGGQDS) is a binding site for ATP. A Mg(2+)-binding site is contributed by Asp52. Arg139 provides a ligand contact to deamido-NAD(+). Thr159 contacts ATP. Residue Glu164 participates in Mg(2+) binding. Deamido-NAD(+) contacts are provided by Lys172 and Asp179. Residues Lys188 and Thr210 each coordinate ATP. 259–260 (HK) lines the deamido-NAD(+) pocket.

Belongs to the NAD synthetase family. Homodimer.

The enzyme catalyses deamido-NAD(+) + NH4(+) + ATP = AMP + diphosphate + NAD(+) + H(+). Its pathway is cofactor biosynthesis; NAD(+) biosynthesis; NAD(+) from deamido-NAD(+) (ammonia route): step 1/1. Catalyzes the ATP-dependent amidation of deamido-NAD to form NAD. Uses ammonia as a nitrogen source. This is NH(3)-dependent NAD(+) synthetase from Streptococcus thermophilus (strain ATCC BAA-250 / LMG 18311).